We begin with the raw amino-acid sequence, 204 residues long: Putative peroxiredoxin ycf42 (204 aa).

A Thioredoxin domain is found at P5–Y163.

The protein belongs to the peroxiredoxin family. AhpC/Prx1 subfamily.

Its subcellular location is the plastid. The protein resides in the chloroplast. The catalysed reaction is a hydroperoxide + [protein]-dithiol = [protein]-disulfide + an alcohol + H2O. The protein is Putative peroxiredoxin ycf42 (ycf42) of Trieres chinensis (Marine centric diatom).